The sequence spans 141 residues: uncharacterized protein (141 aa).

This is an uncharacterized protein from Homo sapiens (Human).